Consider the following 132-residue polypeptide: Large ribosomal subunit protein bL19 (132 aa).

Belongs to the bacterial ribosomal protein bL19 family.

Functionally, this protein is located at the 30S-50S ribosomal subunit interface and may play a role in the structure and function of the aminoacyl-tRNA binding site. The sequence is that of Large ribosomal subunit protein bL19 from Rhodospirillum centenum (strain ATCC 51521 / SW).